The sequence spans 211 residues: Ribosomal RNA small subunit methyltransferase G (211 aa).

S-adenosyl-L-methionine contacts are provided by residues Gly-73, Phe-78, 124–125 (VE), and Arg-137.

It belongs to the methyltransferase superfamily. RNA methyltransferase RsmG family.

The protein resides in the cytoplasm. Specifically methylates the N7 position of a guanine in 16S rRNA. This chain is Ribosomal RNA small subunit methyltransferase G, found in Christiangramia forsetii (strain DSM 17595 / CGMCC 1.15422 / KT0803) (Gramella forsetii).